A 201-amino-acid polypeptide reads, in one-letter code: Imidazole glycerol phosphate synthase subunit HisH (201 aa).

The 201-residue stretch at 1-201 folds into the Glutamine amidotransferase type-1 domain; it reads MVFIADYGAG…LQVLRNFAEC (201 aa). Cys-79 acts as the Nucleophile in catalysis. Active-site residues include His-183 and Glu-185.

In terms of assembly, heterodimer of HisH and HisF.

The protein localises to the cytoplasm. It carries out the reaction 5-[(5-phospho-1-deoxy-D-ribulos-1-ylimino)methylamino]-1-(5-phospho-beta-D-ribosyl)imidazole-4-carboxamide + L-glutamine = D-erythro-1-(imidazol-4-yl)glycerol 3-phosphate + 5-amino-1-(5-phospho-beta-D-ribosyl)imidazole-4-carboxamide + L-glutamate + H(+). The catalysed reaction is L-glutamine + H2O = L-glutamate + NH4(+). Its pathway is amino-acid biosynthesis; L-histidine biosynthesis; L-histidine from 5-phospho-alpha-D-ribose 1-diphosphate: step 5/9. In terms of biological role, IGPS catalyzes the conversion of PRFAR and glutamine to IGP, AICAR and glutamate. The HisH subunit catalyzes the hydrolysis of glutamine to glutamate and ammonia as part of the synthesis of IGP and AICAR. The resulting ammonia molecule is channeled to the active site of HisF. This Chlorobium luteolum (strain DSM 273 / BCRC 81028 / 2530) (Pelodictyon luteolum) protein is Imidazole glycerol phosphate synthase subunit HisH.